The chain runs to 351 residues: Histidinol-phosphate aminotransferase (351 aa).

The residue at position 213 (lysine 213) is an N6-(pyridoxal phosphate)lysine.

It belongs to the class-II pyridoxal-phosphate-dependent aminotransferase family. Histidinol-phosphate aminotransferase subfamily. As to quaternary structure, homodimer. Pyridoxal 5'-phosphate is required as a cofactor.

It catalyses the reaction L-histidinol phosphate + 2-oxoglutarate = 3-(imidazol-4-yl)-2-oxopropyl phosphate + L-glutamate. The protein operates within amino-acid biosynthesis; L-histidine biosynthesis; L-histidine from 5-phospho-alpha-D-ribose 1-diphosphate: step 7/9. The protein is Histidinol-phosphate aminotransferase of Clostridium kluyveri (strain NBRC 12016).